The primary structure comprises 266 residues: rRNA adenine N-6-methyltransferase (266 aa).

S-adenosyl-L-methionine-binding residues include H14, T16, G41, E62, D87, and N103.

It belongs to the class I-like SAM-binding methyltransferase superfamily. rRNA adenine N(6)-methyltransferase family.

Functionally, involved in erythromycin resistance. This is rRNA adenine N-6-methyltransferase (ermF) from Bacteroides fragilis.